Consider the following 1232-residue polypeptide: Dynactin subunit 1 (1232 aa).

One can recognise a CAP-Gly domain in the interval 31 to 73; sequence GATLFATGKWVGVILDDSKGKNDGTVQGRRYFTCEENHGIFVR. Disordered regions lie at residues 82–183 and 339–358; these read DGAD…AQVK and SASEKQEHIKVQKQMEKKNT. The span at 86–95 shows a compositional bias: low complexity; that stretch reads TTSPETPEPT. The span at 108-117 shows a compositional bias: polar residues; sequence PKSSKLPTRP. Residues 118 to 130 are compositionally biased toward low complexity; sequence SSSAASSGTASAS. Positions 133-144 are enriched in polar residues; sequence EISSSEPSTPAQ. Low complexity predominate over residues 146–163; the sequence is PLAAPIIPSPSSAITSPV. Coiled coils occupy residues 170-505, 908-1005, 1046-1071, and 1136-1166; these read GPSK…KEQQ, ETVI…RTIE, LLLQQIDALRLSMKHLKHENNKLKAH, and AAQLLEQTARLKSLSDTIDKLKNEVMKETVS. Residues 172–183 are compositionally biased toward basic and acidic residues; sequence SKEEENLRAQVK.

It belongs to the dynactin 150 kDa subunit family. As to quaternary structure, monomer and homodimer. Subunit of dynactin, a multiprotein complex part of a tripartite complex with dynein and a adapter, such as BICDL1, BICD2 or HOOK3. The dynactin complex is built around ACTR1A/ACTB filament and consists of an actin-related filament composed of a shoulder domain, a pointed end and a barbed end. Its length is defined by its flexible shoulder domain. The soulder is composed of 2 DCTN1 subunits, 4 DCTN2 and 2 DCTN3. DCTN1/p150(glued) binds directly to microtubules and to cytoplasmic dynein.

The protein resides in the cytoplasm. It is found in the cytoskeleton. It localises to the microtubule organizing center. Its subcellular location is the centrosome. The protein localises to the centriole. The protein resides in the spindle. It is found in the cell cortex. Part of the dynactin complex that activates the molecular motor dynein for ultra-processive transport along microtubules. Plays a key role in dynein-mediated retrograde transport of vesicles and organelles along microtubules by recruiting and tethering dynein to microtubules. Binds to both dynein and microtubules providing a link between specific cargos, microtubules and dynein. Essential for targeting dynein to microtubule plus ends, recruiting dynein to membranous cargos and enhancing dynein processivity (the ability to move along a microtubule for a long distance without falling off the track). Can also act as a brake to slow the dynein motor during motility along the microtubule. Can regulate microtubule stability by promoting microtubule formation, nucleation and polymerization and by inhibiting microtubule catastrophe in neurons. Inhibits microtubule catastrophe by binding both to microtubules and to tubulin, leading to enhanced microtubule stability along the axon. Plays a role in metaphase spindle orientation. Plays a role in centriole cohesion and subdistal appendage organization and function. Its recruitment to the centriole in a KIF3A-dependent manner is essential for the maintenance of centriole cohesion and the formation of subdistal appendage. Also required for microtubule anchoring at the mother centriole. Plays a role in primary cilia formation. This chain is Dynactin subunit 1 (dctn1), found in Xenopus laevis (African clawed frog).